Consider the following 74-residue polypeptide: MKAAISLLLLSALLFVVIEAITYEEGKELFQGERTDCVGDGQRCADWAGPYCCSGYYCSCRSMPYCRCRSDSGK.

The first 20 residues, 1 to 20 (MKAAISLLLLSALLFVVIEA), serve as a signal peptide directing secretion. Positions 21–34 (ITYEEGKELFQGER) are excised as a propeptide. 4 disulfides stabilise this stretch: C37–C53, C44–C58, C52–C68, and C60–C66. The residue at position 72 (S72) is a Serine amide.

Belongs to the neurotoxin 07 (Beta/delta-agtx) family. 02 (aga-3) subfamily. Expressed by the venom gland.

The protein localises to the secreted. Insecticidal neurotoxin that induces an irreversible spastic paralysis when injected into insects. Modifies presynaptic voltage-gated sodium channels (Nav), causing them to open at the normal resting potential of the nerve. This leads to spontaneous release of neurotransmitter and repetitive action potentials in motor neurons. The sequence is that of U3-agatoxin-Ao1d from Agelena orientalis (Funnel-web spider).